The chain runs to 371 residues: DNA replication and repair protein RecF (371 aa).

30 to 37 (GSNGQGKT) lines the ATP pocket.

Belongs to the RecF family.

The protein resides in the cytoplasm. The RecF protein is involved in DNA metabolism; it is required for DNA replication and normal SOS inducibility. RecF binds preferentially to single-stranded, linear DNA. It also seems to bind ATP. The protein is DNA replication and repair protein RecF of Acidothermus cellulolyticus (strain ATCC 43068 / DSM 8971 / 11B).